The chain runs to 350 residues: uncharacterized protein (350 aa).

A compositionally biased stretch (basic and acidic residues) spans 197–212; it reads KNDNSEDNRSEDDLKS. The disordered stretch occupies residues 197-217; that stretch reads KNDNSEDNRSEDDLKSSQDPV.

Its subcellular location is the plastid. It localises to the chloroplast. This is an uncharacterized protein from Euglena gracilis.